The sequence spans 113 residues: Large ribosomal subunit protein P2 (113 aa).

Residues 66 to 113 (PVGGGGAVAAADAAPAAAAGGDKKEAKKEEKKEESESEDDDMGFALFE) form a disordered region. Low complexity predominate over residues 73-85 (VAAADAAPAAAAG). Residues 86-99 (GDKKEAKKEEKKEE) are compositionally biased toward basic and acidic residues. Phosphoserine occurs at positions 100 and 102.

Belongs to the eukaryotic ribosomal protein P1/P2 family. As to quaternary structure, P1 and P2 exist as dimers at the large ribosomal subunit.

Its function is as follows. Plays an important role in the elongation step of protein synthesis. This Drosophila melanogaster (Fruit fly) protein is Large ribosomal subunit protein P2 (RpLP2).